Reading from the N-terminus, the 156-residue chain is 6,7-dimethyl-8-ribityllumazine synthase (156 aa).

5-amino-6-(D-ribitylamino)uracil contacts are provided by residues Phe22, 57 to 59, and 81 to 83; these read AVE and SVI. 86–87 contributes to the (2S)-2-hydroxy-3-oxobutyl phosphate binding site; the sequence is GT. Residue His89 is the Proton donor of the active site. Phe114 lines the 5-amino-6-(D-ribitylamino)uracil pocket. Arg128 contacts (2S)-2-hydroxy-3-oxobutyl phosphate.

Belongs to the DMRL synthase family. In terms of assembly, forms an icosahedral capsid composed of 60 subunits, arranged as a dodecamer of pentamers.

It catalyses the reaction (2S)-2-hydroxy-3-oxobutyl phosphate + 5-amino-6-(D-ribitylamino)uracil = 6,7-dimethyl-8-(1-D-ribityl)lumazine + phosphate + 2 H2O + H(+). Its pathway is cofactor biosynthesis; riboflavin biosynthesis; riboflavin from 2-hydroxy-3-oxobutyl phosphate and 5-amino-6-(D-ribitylamino)uracil: step 1/2. Its function is as follows. Catalyzes the formation of 6,7-dimethyl-8-ribityllumazine by condensation of 5-amino-6-(D-ribitylamino)uracil with 3,4-dihydroxy-2-butanone 4-phosphate. This is the penultimate step in the biosynthesis of riboflavin. The sequence is that of 6,7-dimethyl-8-ribityllumazine synthase from Vibrio vulnificus (strain CMCP6).